The following is a 293-amino-acid chain: Homeobox protein ceh-24 (293 aa).

Basic and acidic residues-rich tracts occupy residues 1-15 (MSEKESPSPQHKKDE) and 22-38 (QETKDSEDDATKKMKIK). Disordered regions lie at residues 1 to 38 (MSEKESPSPQHKKDEVVDDTEQETKDSEDDATKKMKIK) and 203 to 256 (EKEK…SNGV). A DNA-binding region (homeobox) is located at residues 144 to 203 (RRKRRVLFSQAQVYELERRFKQAKYLTAPEREQLANSIRLTPTQVKIWFQNHRYKCKRQE).

Belongs to the NK-2 homeobox family. In terms of tissue distribution, expressed in the 8 vulval muscles, 8-10 ventral neurons in the head and in the most posterior pharyngeal muscle cell, m8.

It is found in the nucleus. Probable transcriptional regulator that is required in neural development for the normal formation of sublateral cholinergic motor neuron processes. Plays a role in regulating the expression of acetylcholine transporter protein unc-17 in the sublateral processes. In particular, it is required in sublateral motor neurons for a left-right turning behavior that occurs during the lethargus phase of the normal sleep process called 'flipping'. During 'flipping' animals rotate 180 degrees about their longitudinal axis. The sequence is that of Homeobox protein ceh-24 from Caenorhabditis briggsae.